A 761-amino-acid polypeptide reads, in one-letter code: uncharacterized protein (761 aa).

TPR repeat units follow at residues 35–68 (EEGK…SLNS), 69–102 (AQGL…SDVD), 103–136 (DALY…NPNK), 137–170 (VEIL…KPDF), 172–203 (EAEE…KNPN), 204–237 (EEVY…FPHD), 351–384 (LGVL…NPSA), and 419–452 (ASAG…VKEE). The tract at residues 487 to 761 (KRPIFVLGMP…PKGLVGYTVG (275 aa)) is protein sulfotransferase-like.

In the C-terminal section; belongs to the protein sulfotransferase family.

This is an uncharacterized protein from Aquifex aeolicus (strain VF5).